The primary structure comprises 181 residues: Translationally-controlled tumor protein homolog (181 aa).

Residues 1–181 (MLIYKDIFTD…VKEAIIEEKC (181 aa)) form the TCTP domain.

This sequence belongs to the TCTP family.

The protein localises to the cytoplasm. Functionally, involved in calcium binding and microtubule stabilization. The protein is Translationally-controlled tumor protein homolog (tct-1) of Caenorhabditis elegans.